We begin with the raw amino-acid sequence, 534 residues long: Endoglucanase 5 (534 aa).

A signal peptide spans 1-27; sequence MSDVSGRFVVAAAVVAVSLAMAAAAAA. The active-site Nucleophile is the D82. Catalysis depends on residues H432, D484, and E493. Residues 515–534 are disordered; it reads RRRGEDAPPSSTSPVAEDDL.

Belongs to the glycosyl hydrolase 9 (cellulase E) family.

The protein localises to the secreted. It carries out the reaction Endohydrolysis of (1-&gt;4)-beta-D-glucosidic linkages in cellulose, lichenin and cereal beta-D-glucans.. The chain is Endoglucanase 5 from Oryza sativa subsp. japonica (Rice).